We begin with the raw amino-acid sequence, 330 residues long: Phosphate acyltransferase (330 aa).

This sequence belongs to the PlsX family. In terms of assembly, homodimer. Probably interacts with PlsY.

Its subcellular location is the cytoplasm. The catalysed reaction is a fatty acyl-[ACP] + phosphate = an acyl phosphate + holo-[ACP]. It functions in the pathway lipid metabolism; phospholipid metabolism. Catalyzes the reversible formation of acyl-phosphate (acyl-PO(4)) from acyl-[acyl-carrier-protein] (acyl-ACP). This enzyme utilizes acyl-ACP as fatty acyl donor, but not acyl-CoA. The sequence is that of Phosphate acyltransferase from Bacillus cereus (strain AH820).